We begin with the raw amino-acid sequence, 931 residues long: Protocadherin gamma-B2 (931 aa).

Positions 1–30 (MKASSGRCGLVRWLQVLLPFLLSLFPGALP) are cleaved as a signal peptide. 6 Cadherin domains span residues 31-133 (VQIR…TPLF), 134-242 (KQTK…PPVF), 243-347 (SQDV…APEV), 348-452 (IVTS…APVF), 453-562 (QQTS…APRV), and 570-675 (DGSA…LPDL). Over 31-691 (VQIRYSIPEE…SDPQAKLQFY (661 aa)) the chain is Extracellular. Asn419 and Asn545 each carry an N-linked (GlcNAc...) asparagine glycan. A helical transmembrane segment spans residues 692–712 (LVVALALISVLFFLAVILAIS). The Cytoplasmic segment spans residues 713 to 931 (LRLRLSSRSD…KKKSGKKEKK (219 aa)). Disordered stretches follow at residues 814 to 840 (DWRFSQAQRPGTSGSQNGDDTGTWPNN) and 901 to 931 (ATLTNAAGKRDGKAPAGGNGNKKKSGKKEKK). The segment covering 815 to 840 (WRFSQAQRPGTSGSQNGDDTGTWPNN) has biased composition (polar residues). Residues 921 to 931 (NKKKSGKKEKK) show a composition bias toward basic residues.

The protein resides in the cell membrane. Functionally, potential calcium-dependent cell-adhesion protein. May be involved in the establishment and maintenance of specific neuronal connections in the brain. The chain is Protocadherin gamma-B2 (PCDHGB2) from Homo sapiens (Human).